A 262-amino-acid chain; its full sequence is MINVESPLNLETTLGSLQFSHGSVQNIGMSISMIIGCELGDKSFIVTALLAYQYGRASVFFGSYLALFFMTSFAVLVGRAAPFLFPKSITHILGGTLFLIFGVKMLKESKEVRESQQSLENEFDKVEKIIVNEEDMKKTLELGLPASNRSSSTLKDKFFKVFSMSCFKNLFSKKFSRAFIKAFALIFVSELGDRSQIATIVMSAKEKVLDVFIGVNIGHMLCTMVAVIVGRYISNKIEMYKVLFFGGIVFMIFGILYIFQGF.

A run of 5 helical transmembrane segments spans residues 31-51, 57-77, 83-103, 208-228, and 242-262; these read ISMIIGCELGDKSFIVTALLA, ASVFFGSYLALFFMTSFAVLV, FLFPKSITHILGGTLFLIFGV, VLDVFIGVNIGHMLCTMVAVI, and VLFFGGIVFMIFGILYIFQGF.

The protein belongs to the GDT1 family.

It is found in the endoplasmic reticulum membrane. This chain is GDT1-like protein C186.05c, found in Schizosaccharomyces pombe (strain 972 / ATCC 24843) (Fission yeast).